A 779-amino-acid polypeptide reads, in one-letter code: Ribonucleoside-diphosphate reductase large subunit (779 aa).

Substrate-binding positions include Ser178, Ser193–Cys194, Gly222, Asn420–Glu424, and Pro614–Ser618. Cys194 and Cys440 are oxidised to a cystine. The active-site Proton acceptor is Asn420. The active-site Cysteine radical intermediate is Cys422. The active-site Proton acceptor is the Glu424.

It belongs to the ribonucleoside diphosphate reductase large chain family. Heterotetramer composed of a homodimer of the large subunit (R1) and a homodimer of the small subunit (R2). Larger multisubunit protein complex are also active, composed of (R1)n(R2)n.

It catalyses the reaction a 2'-deoxyribonucleoside 5'-diphosphate + [thioredoxin]-disulfide + H2O = a ribonucleoside 5'-diphosphate + [thioredoxin]-dithiol. Its activity is regulated as follows. Under complex allosteric control mediated by deoxynucleoside triphosphates and ATP binding. The type of nucleotide bound at the specificity site determines substrate preference. It seems probable that ATP makes the enzyme reduce CDP and UDP, dGTP favors ADP reduction and dTTP favors GDP reduction. Functionally, ribonucleoside-diphosphate reductase holoenzyme provides the precursors necessary for viral DNA synthesis. Allows virus growth in non-dividing cells. Catalyzes the biosynthesis of deoxyribonucleotides from the corresponding ribonucleotides. The polypeptide is Ribonucleoside-diphosphate reductase large subunit (African swine fever virus (isolate Tick/Malawi/Lil 20-1/1983) (ASFV)).